The primary structure comprises 416 residues: Enterobactin exporter EntS (416 aa).

Over 1 to 21 (MNKQSWLLNLSLLKTHPAFRA) the chain is Cytoplasmic. A helical transmembrane segment spans residues 22–42 (VFLARFISIVSLGLLGVAVPV). The Periplasmic segment spans residues 43–55 (QIQMMTHSTWQVG). A helical membrane pass occupies residues 56–76 (LSVTLTGGAMFVGLMVGGVLA). At 77-83 (DRYERKK) the chain is on the cytoplasmic side. A helical transmembrane segment spans residues 84 to 104 (VILLARGTCGIGFIGLCLNAL). At 105 to 109 (LPEPS) the chain is on the periplasmic side. Residues 110–130 (LLAIYLLGLWDGFFASLGVTA) form a helical membrane-spanning segment. Topologically, residues 131 to 156 (LLAATPALVGRENLMQAGAITMLTVR) are cytoplasmic. The chain crosses the membrane as a helical span at residues 157-177 (LGSVISPMIGGLLLATGGVAW). Residue Asn-178 is a topological domain, periplasmic. A helical membrane pass occupies residues 179–199 (YGLAAAGTFITLLPLLSLPAL). The Cytoplasmic portion of the chain corresponds to 200-218 (PPPPQPREHPLKSLLAGFR). Residues 219–239 (FLLASPLVGGIALLGGLLTMA) traverse the membrane as a helical segment. Residues 240 to 256 (SAVRVLYPALADNWQMS) lie on the Periplasmic side of the membrane. Residues 257 to 277 (AAQIGFLYAAIPLGAAIGALT) form a helical membrane-spanning segment. Residues 278–287 (SGKLAHSARP) are Cytoplasmic-facing. Residues 288–307 (GLLMLLSTLGSFLAIGLFGL) form a helical membrane-spanning segment. The Periplasmic portion of the chain corresponds to 308–313 (MPMWIL). A helical membrane pass occupies residues 314–336 (GVVCLALFGWLSAVSSLLQYTML). The Cytoplasmic segment spans residues 337-356 (QTQTPEAMLGRINGLWTAQN). The chain crosses the membrane as a helical span at residues 357-377 (VTGDAIGAALLGGLGAMMTPV). Position 378 (Ala-378) is a topological domain, periplasmic. A helical transmembrane segment spans residues 379–399 (SASASGFGLLIIGVLLLLVLV). Residues 400–416 (ELRRFRQTPPQVTASDG) are Cytoplasmic-facing.

The protein belongs to the major facilitator superfamily. EntS (TC 2.A.1.38) family.

It localises to the cell inner membrane. Component of an export pathway for enterobactin. The chain is Enterobactin exporter EntS from Escherichia coli O157:H7.